Reading from the N-terminus, the 347-residue chain is Spermatogenesis associated 6-like protein (347 aa).

The disordered stretch occupies residues 115–199 (SKSHGQRVQA…ENNLEHCSKK (85 aa)). The span at 116-125 (KSHGQRVQAT) shows a compositional bias: polar residues. Positions 153–166 (LHLHRPTQRNHGKS) are enriched in basic residues. Positions 170 to 183 (PGERKPPFVVRHVD) are enriched in basic and acidic residues. 2 positions are modified to phosphoserine: S218 and S221. Residues 234-285 (ERIVLKSQPPPPVDSSESRKPSLSHQGDASLHTETSVTTSQLSRPPSPLNQP) form a disordered region. The segment covering 254 to 277 (PSLSHQGDASLHTETSVTTSQLSR) has biased composition (polar residues).

The protein belongs to the SPATA6 family.

The polypeptide is Spermatogenesis associated 6-like protein (Spata6l) (Mus musculus (Mouse)).